The primary structure comprises 230 residues: Urease accessory protein UreE (230 aa).

The segment covering 200–210 (HAIHSHGTGHT) has biased composition (basic residues). The disordered stretch occupies residues 200–230 (HAIHSHGTGHTHSHDHDHSHSHGDHDHDHKH). A compositionally biased stretch (basic and acidic residues) spans 211–230 (HSHDHDHSHSHGDHDHDHKH).

The protein belongs to the UreE family.

The protein resides in the cytoplasm. Involved in urease metallocenter assembly. Binds nickel. Probably functions as a nickel donor during metallocenter assembly. The polypeptide is Urease accessory protein UreE (Yersinia enterocolitica serotype O:8 / biotype 1B (strain NCTC 13174 / 8081)).